A 392-amino-acid chain; its full sequence is Transcription factor GATA-4 (392 aa).

The interval 75–113 is disordered; sequence SSAYNPGTSHPPVSPRFTFSSSPPITAPSSREVSYSSPL. Residues 91–113 are compositionally biased toward polar residues; the sequence is FTFSSSPPITAPSSREVSYSSPL. 2 consecutive GATA-type zinc fingers follow at residues 184–208 and 238–262; these read CVNC…CNAC and CANC…CNAC. Disordered regions lie at residues 279 to 339 and 359 to 392; these read KEGI…HSNS and MPSL…LVLA. Residues 284-293 show a composition bias toward basic residues; sequence TRKRKPKNLS. Low complexity predominate over residues 302 to 316; that stretch reads SGSDSLTPSTSSTNS. Positions 364 to 380 are enriched in polar residues; sequence LSPQNHHSTFNPSPQAN.

In terms of tissue distribution, expressed at high levels in heart, small intestine, stomach, ovary, and liver. Found at much lower levels in lung, spleen, pancreas and skin.

It is found in the nucleus. Its function is as follows. Transcriptional activator that binds to the consensus sequence 5'-AGATAG-3'. Associated with cardiac specification and can regulate cardiac-specific transcription during embryogenesis. Activates the expression of cardiac MHC-alpha in vivo. The protein is Transcription factor GATA-4 (gata4) of Xenopus laevis (African clawed frog).